A 344-amino-acid polypeptide reads, in one-letter code: Fructose-1,6-bisphosphatase class 1 (344 aa).

4 residues coordinate Mg(2+): glutamate 107, aspartate 129, leucine 131, and aspartate 132. Positions 224, 252, and 282 each coordinate substrate. Residue glutamate 288 participates in Mg(2+) binding.

The protein belongs to the FBPase class 1 family. As to quaternary structure, homotetramer. It depends on Mg(2+) as a cofactor.

Its subcellular location is the cytoplasm. It catalyses the reaction beta-D-fructose 1,6-bisphosphate + H2O = beta-D-fructose 6-phosphate + phosphate. The protein operates within carbohydrate biosynthesis; Calvin cycle. The chain is Fructose-1,6-bisphosphatase class 1 from Synechococcus sp. (strain ATCC 27144 / PCC 6301 / SAUG 1402/1) (Anacystis nidulans).